We begin with the raw amino-acid sequence, 654 residues long: tRNA uridine 5-carboxymethylaminomethyl modification enzyme MnmG (654 aa).

Position 17-22 (17-22) interacts with FAD; that stretch reads GGGHAG. 289–303 is an NAD(+) binding site; the sequence is GPRYCPSIEDKIVKF.

This sequence belongs to the MnmG family. Homodimer. Heterotetramer of two MnmE and two MnmG subunits. FAD serves as cofactor.

The protein localises to the cytoplasm. NAD-binding protein involved in the addition of a carboxymethylaminomethyl (cmnm) group at the wobble position (U34) of certain tRNAs, forming tRNA-cmnm(5)s(2)U34. This chain is tRNA uridine 5-carboxymethylaminomethyl modification enzyme MnmG, found in Prochlorococcus marinus (strain MIT 9515).